The following is a 57-amino-acid chain: Zinc finger protein MJ0458.1 (57 aa).

Short sequence motifs (c(P)XCG motif) lie at residues Cys8 to Asn12, Cys26 to Gly30, Cys37 to Arg41, and Cys49 to Gly53. The Zn(2+) site is built by Cys26 and Cys29. Zn(2+)-binding residues include Cys49 and Cys52.

In terms of assembly, monomer in solution.

In terms of biological role, zinc-binding protein that binds only one zinc ion. This Methanocaldococcus jannaschii (strain ATCC 43067 / DSM 2661 / JAL-1 / JCM 10045 / NBRC 100440) (Methanococcus jannaschii) protein is Zinc finger protein MJ0458.1.